Reading from the N-terminus, the 124-residue chain is MKPGAFQIAEGTITINEGREIREVTVKNTGSRSIQVGSHFHFAEANGALLFDRELAIGMRLDVPSGTSVRFEPGEQKTVSLVEIRGRKTIRGLNGMADTFIDERGKEKTLANLKQAGWMEGVIR.

This sequence belongs to the urease beta subunit family. In terms of assembly, heterotrimer of UreA (gamma), UreB (beta) and UreC (alpha) subunits. Three heterotrimers associate to form the active enzyme.

The protein resides in the cytoplasm. The enzyme catalyses urea + 2 H2O + H(+) = hydrogencarbonate + 2 NH4(+). The protein operates within nitrogen metabolism; urea degradation; CO(2) and NH(3) from urea (urease route): step 1/1. In Bacillus subtilis (strain 168), this protein is Urease subunit beta.